The chain runs to 94 residues: DNA-directed RNA polymerase subunit omega (94 aa).

This sequence belongs to the RNA polymerase subunit omega family. Consists of a sigma factor and the RNAP core enzyme which is composed of 2 alpha chains, 1 beta chain, 1 beta' chain and 1 subunit omega.

The catalysed reaction is RNA(n) + a ribonucleoside 5'-triphosphate = RNA(n+1) + diphosphate. Its function is as follows. Promotes RNA polymerase assembly. Latches the N- and C-terminal regions of the beta' subunit thereby facilitating its interaction with the beta and alpha subunits. The polypeptide is DNA-directed RNA polymerase subunit omega (Shewanella violacea (strain JCM 10179 / CIP 106290 / LMG 19151 / DSS12)).